Consider the following 416-residue polypeptide: Serine hydroxymethyltransferase (416 aa).

(6S)-5,6,7,8-tetrahydrofolate contacts are provided by residues leucine 118 and 122–124 (GHL). Lysine 226 carries the post-translational modification N6-(pyridoxal phosphate)lysine. 350–352 (SPF) lines the (6S)-5,6,7,8-tetrahydrofolate pocket.

This sequence belongs to the SHMT family. Homodimer. Pyridoxal 5'-phosphate serves as cofactor.

Its subcellular location is the cytoplasm. The catalysed reaction is (6R)-5,10-methylene-5,6,7,8-tetrahydrofolate + glycine + H2O = (6S)-5,6,7,8-tetrahydrofolate + L-serine. The protein operates within one-carbon metabolism; tetrahydrofolate interconversion. It functions in the pathway amino-acid biosynthesis; glycine biosynthesis; glycine from L-serine: step 1/1. Functionally, catalyzes the reversible interconversion of serine and glycine with tetrahydrofolate (THF) serving as the one-carbon carrier. This reaction serves as the major source of one-carbon groups required for the biosynthesis of purines, thymidylate, methionine, and other important biomolecules. Also exhibits THF-independent aldolase activity toward beta-hydroxyamino acids, producing glycine and aldehydes, via a retro-aldol mechanism. In Sulfurovum sp. (strain NBC37-1), this protein is Serine hydroxymethyltransferase.